We begin with the raw amino-acid sequence, 478 residues long: Probable cyclin-dependent kinase 9 (478 aa).

Residues 1–17 (MSAQNYHAGLHQSSTQR) are compositionally biased toward polar residues. The tract at residues 1–55 (MSAQNYHAGLHQSSTQRPPKRPNTEHAQEPPKRALIGGQTTPSSSGGGQTPNGTN) is disordered. The span at 22-32 (PNTEHAQEPPK) shows a compositional bias: basic and acidic residues. The 329-residue stretch at 85 to 413 (YEKLNKIGQG…SDEAEDDIWF (329 aa)) folds into the Protein kinase domain. Residues 91–99 (IGQGTFGEV) and Lys-114 contribute to the ATP site. Catalysis depends on Asp-217, which acts as the Proton acceptor. Positions 444–478 (HANRGRHQNAQQRPNQQQARPSNAIPAGQYRDTIF) are disordered. Over residues 451–464 (QNAQQRPNQQQARP) the composition is skewed to low complexity.

It belongs to the protein kinase superfamily. CMGC Ser/Thr protein kinase family. CDC2/CDKX subfamily. In terms of assembly, associates with cyclin-T (cit-1.1 or cit-1.2) to form P-TEFb.

It is found in the nucleus. It catalyses the reaction L-seryl-[protein] + ATP = O-phospho-L-seryl-[protein] + ADP + H(+). The enzyme catalyses L-threonyl-[protein] + ATP = O-phospho-L-threonyl-[protein] + ADP + H(+). The catalysed reaction is [DNA-directed RNA polymerase] + ATP = phospho-[DNA-directed RNA polymerase] + ADP + H(+). Functionally, essential member of the cyclin-dependent kinase pair (CDK9/cyclin-T) complex, also called positive transcription elongation factor B (P-TEFb), which is proposed to facilitate the transition from abortive to production elongation by phosphorylating the CTD (C-terminal domain) of the large subunit of RNA polymerase II (RNAP II) and spt-5. This is Probable cyclin-dependent kinase 9 (cdk-9) from Caenorhabditis elegans.